We begin with the raw amino-acid sequence, 122 residues long: Nuclear transport factor 2A (122 aa).

Met-1 carries the post-translational modification N-acetylmethionine. The NTF2 domain maps to 6–119; the sequence is VAKAFVEHYY…YYVFNDIFRL (114 aa).

As to quaternary structure, interacts with RAN1. As to expression, expressed in roots, stems, leaves and flowers, and, at low levels, in siliques.

The protein resides in the cytoplasm. It localises to the nucleus. It is found in the nucleus envelope. Its function is as follows. Facilitates protein transport into the nucleus. Interacts with various nucleoporins and with Ran-GDP. Could be part of a multicomponent system of cytosolic factors that assemble at the pore complex during nuclear import. The protein is Nuclear transport factor 2A of Arabidopsis thaliana (Mouse-ear cress).